The following is a 251-amino-acid chain: Ly6/PLAUR domain-containing protein 5 (251 aa).

The signal sequence occupies residues 1 to 25 (MAMGVPRVILLCLFGAALCLTGSQA). Residues Asn120 and Asn174 are each glycosylated (N-linked (GlcNAc...) asparagine). Positions 135–214 (CYACIGVHQD…GSCCEGYLCN (80 aa)) constitute a UPAR/Ly6 domain. The GPI-anchor amidated alanine moiety is linked to residue Ala225. Residues 226–251 (SATTPPRALQVLALLLPVLLLVGLSA) constitute a propeptide, removed in mature form.

Its subcellular location is the cell membrane. This is Ly6/PLAUR domain-containing protein 5 (LYPD5) from Homo sapiens (Human).